Reading from the N-terminus, the 268-residue chain is 3-deoxy-manno-octulosonate cytidylyltransferase (268 aa).

Belongs to the KdsB family.

It is found in the cytoplasm. It catalyses the reaction 3-deoxy-alpha-D-manno-oct-2-ulosonate + CTP = CMP-3-deoxy-beta-D-manno-octulosonate + diphosphate. It participates in nucleotide-sugar biosynthesis; CMP-3-deoxy-D-manno-octulosonate biosynthesis; CMP-3-deoxy-D-manno-octulosonate from 3-deoxy-D-manno-octulosonate and CTP: step 1/1. Its pathway is bacterial outer membrane biogenesis; lipopolysaccharide biosynthesis. Activates KDO (a required 8-carbon sugar) for incorporation into bacterial lipopolysaccharide in Gram-negative bacteria. The polypeptide is 3-deoxy-manno-octulosonate cytidylyltransferase (Ralstonia pickettii (strain 12J)).